The primary structure comprises 93 residues: Phosphoribosyl-ATP pyrophosphatase (93 aa).

The protein belongs to the PRA-PH family.

The protein resides in the cytoplasm. The catalysed reaction is 1-(5-phospho-beta-D-ribosyl)-ATP + H2O = 1-(5-phospho-beta-D-ribosyl)-5'-AMP + diphosphate + H(+). It participates in amino-acid biosynthesis; L-histidine biosynthesis; L-histidine from 5-phospho-alpha-D-ribose 1-diphosphate: step 2/9. The polypeptide is Phosphoribosyl-ATP pyrophosphatase (Rhodococcus erythropolis (strain PR4 / NBRC 100887)).